The primary structure comprises 545 residues: Glucose-6-phosphate isomerase (545 aa).

Glu343 (proton donor) is an active-site residue. Catalysis depends on residues His374 and Lys513.

Belongs to the GPI family.

It localises to the cytoplasm. The enzyme catalyses alpha-D-glucose 6-phosphate = beta-D-fructose 6-phosphate. It functions in the pathway carbohydrate biosynthesis; gluconeogenesis. The protein operates within carbohydrate degradation; glycolysis; D-glyceraldehyde 3-phosphate and glycerone phosphate from D-glucose: step 2/4. Its function is as follows. Catalyzes the reversible isomerization of glucose-6-phosphate to fructose-6-phosphate. In Methylibium petroleiphilum (strain ATCC BAA-1232 / LMG 22953 / PM1), this protein is Glucose-6-phosphate isomerase.